We begin with the raw amino-acid sequence, 337 residues long: MNTEATHDQNEALTTGARLRNAREQLGLSQQAVAERLCLKVSTVRDIEEDKAPADLASTFLRGYIRSYARLVHIPEEELLLGLEKQAPLRAAKVAPMQSFSLGKRRKKRDGWLMTFTWLVLFVVIGLSGAWWWQDHKAQQEEITTMADQSSAELSSNSEQGQSVPLNTSTTTDPATTSTPPASVDTTATNTQTPAVTAPAPAVDPQQNAVVSPSQANVDTAATPAPTAATTPDGAAPLPTDQAGVTTPVADPNALVMNFTADCWLEVTDATGKKLFSGMQRKDGNLNLTGQAPYKLKIGAPAAVQIQYQGKPVDLSRFIRTNQVARLTLNAEQSPAQ.

Residues 1–111 (MNTEATHDQN…LGKRRKKRDG (111 aa)) lie on the Cytoplasmic side of the membrane. Residues 19 to 71 (LRNAREQLGLSQQAVAERLCLKVSTVRDIEEDKAPADLASTFLRGYIRSYARL) enclose the HTH cro/C1-type domain. The H-T-H motif DNA-binding region spans 30–49 (QQAVAERLCLKVSTVRDIEE). A helical; Signal-anchor for type II membrane protein transmembrane segment spans residues 112-132 (WLMTFTWLVLFVVIGLSGAWW). The Periplasmic portion of the chain corresponds to 133–337 (WQDHKAQQEE…TLNAEQSPAQ (205 aa)). A compositionally biased stretch (polar residues) spans 145–167 (TMADQSSAELSSNSEQGQSVPLN). Positions 145-235 (TMADQSSAEL…PTAATTPDGA (91 aa)) are disordered. Low complexity predominate over residues 168-207 (TSTTTDPATTSTPPASVDTTATNTQTPAVTAPAPAVDPQQ). A compositionally biased stretch (polar residues) spans 208–218 (NAVVSPSQANV). Residues 219 to 235 (DTAATPAPTAATTPDGA) are compositionally biased toward low complexity.

Belongs to the RodZ family.

The protein resides in the cell inner membrane. Functionally, cytoskeletal protein that is involved in cell-shape control through regulation of the length of the long axis. This is Cytoskeleton protein RodZ from Shigella boydii serotype 4 (strain Sb227).